We begin with the raw amino-acid sequence, 98 residues long: Integration host factor subunit alpha (98 aa).

The tract at residues 54–74 (LRDKSSRPGRNPKTGESVPVS) is disordered.

It belongs to the bacterial histone-like protein family. In terms of assembly, heterodimer of an alpha and a beta chain.

In terms of biological role, this protein is one of the two subunits of integration host factor, a specific DNA-binding protein that functions in genetic recombination as well as in transcriptional and translational control. The polypeptide is Integration host factor subunit alpha (ihfA) (Pasteurella multocida (strain Pm70)).